A 183-amino-acid polypeptide reads, in one-letter code: ATP synthase subunit delta (183 aa).

The protein belongs to the ATPase delta chain family. In terms of assembly, F-type ATPases have 2 components, F(1) - the catalytic core - and F(0) - the membrane proton channel. F(1) has five subunits: alpha(3), beta(3), gamma(1), delta(1), epsilon(1). F(0) has three main subunits: a(1), b(2) and c(10-14). The alpha and beta chains form an alternating ring which encloses part of the gamma chain. F(1) is attached to F(0) by a central stalk formed by the gamma and epsilon chains, while a peripheral stalk is formed by the delta and b chains.

Its subcellular location is the cell inner membrane. In terms of biological role, f(1)F(0) ATP synthase produces ATP from ADP in the presence of a proton or sodium gradient. F-type ATPases consist of two structural domains, F(1) containing the extramembraneous catalytic core and F(0) containing the membrane proton channel, linked together by a central stalk and a peripheral stalk. During catalysis, ATP synthesis in the catalytic domain of F(1) is coupled via a rotary mechanism of the central stalk subunits to proton translocation. Its function is as follows. This protein is part of the stalk that links CF(0) to CF(1). It either transmits conformational changes from CF(0) to CF(1) or is implicated in proton conduction. The polypeptide is ATP synthase subunit delta (Maridesulfovibrio salexigens (strain ATCC 14822 / DSM 2638 / NCIMB 8403 / VKM B-1763) (Desulfovibrio salexigens)).